The sequence spans 247 residues: Ribonuclease 3 (247 aa).

The region spanning 21–149 is the RNase III domain; the sequence is VDHQPLLDHL…LFGAIFRQHG (129 aa). Glutamate 62 contacts Mg(2+). Residue aspartate 66 is part of the active site. Residues aspartate 135 and glutamate 138 each contribute to the Mg(2+) site. Glutamate 138 is a catalytic residue. The 69-residue stretch at 176-244 folds into the DRBM domain; sequence DWKTTLQEEL…AHQAFRKLRE (69 aa).

It belongs to the ribonuclease III family. Homodimer. Mg(2+) is required as a cofactor.

The protein resides in the cytoplasm. The catalysed reaction is Endonucleolytic cleavage to 5'-phosphomonoester.. In terms of biological role, digests double-stranded RNA. Involved in the processing of primary rRNA transcript to yield the immediate precursors to the large and small rRNAs (23S and 16S). Processes some mRNAs, and tRNAs when they are encoded in the rRNA operon. Processes pre-crRNA and tracrRNA of type II CRISPR loci if present in the organism. The protein is Ribonuclease 3 of Corynebacterium glutamicum (strain ATCC 13032 / DSM 20300 / JCM 1318 / BCRC 11384 / CCUG 27702 / LMG 3730 / NBRC 12168 / NCIMB 10025 / NRRL B-2784 / 534).